Here is a 176-residue protein sequence, read N- to C-terminus: Ribosome maturation factor RimM (176 aa).

A PRC barrel domain is found at 100-173 (EGEFHLLDLV…WLRLTPPPGL (74 aa)).

This sequence belongs to the RimM family. Binds ribosomal protein uS19.

Its subcellular location is the cytoplasm. Functionally, an accessory protein needed during the final step in the assembly of 30S ribosomal subunit, possibly for assembly of the head region. Essential for efficient processing of 16S rRNA. May be needed both before and after RbfA during the maturation of 16S rRNA. It has affinity for free ribosomal 30S subunits but not for 70S ribosomes. This is Ribosome maturation factor RimM from Prochlorococcus marinus (strain MIT 9313).